The chain runs to 29 residues: Brevinin-2Ed (29 aa).

A disulfide bond links Cys23 and Cys29.

Belongs to the frog skin active peptide (FSAP) family. Brevinin subfamily. Expressed by the skin glands.

The protein localises to the secreted. Shows antibacterial activity against representative Gram-negative and Gram-positive bacterial species, and hemolytic activity. This Pelophylax lessonae (Pool frog) protein is Brevinin-2Ed.